The sequence spans 163 residues: Staphylokinase (163 aa).

Residues 1 to 27 form the signal peptide; the sequence is MLKRSLLFLTVLLLLFSFSSITNEVSA.

This sequence belongs to the staphylokinase family.

It localises to the secreted. Its function is as follows. Potent plasminogen activator that converts plasminogen into plasmin. It forms a 1:1 complex with plasmin, which in turn activates other plasminogen molecules. This Staphylococcus aureus (strain MW2) protein is Staphylokinase (sak).